The following is a 319-amino-acid chain: V-set and transmembrane domain-containing protein 4 (319 aa).

The first 23 residues, 1–23 (MRLRLLALAAAVLLGPAPEVCGA), serve as a signal peptide directing secretion. An Ig-like domain is found at 24–154 (LNVTVSPGPV…SSATEMRVIS (131 aa)). Residues asparagine 25 and asparagine 41 are each glycosylated (N-linked (GlcNAc...) asparagine). Residues cysteine 46 and cysteine 126 are joined by a disulfide bond. Residue asparagine 143 is glycosylated (N-linked (GlcNAc...) asparagine). The helical transmembrane segment at 180–200 (AVLVCCVGILSVLLFTLVIAW) threads the bilayer.

Proteolytically cleaved to generate a bioactive peptide. Peptide Lv is widely expressed in various tissues and the central nervous system, including the retinal photoreceptor layer, hippocampus, olfactory bulb, and cerebellum.

Its subcellular location is the cell membrane. The protein localises to the secreted. Functionally, peptide Lv enhances L-type voltage-gated calcium channel (L-VGCC) currents in retinal photoreceptors. The polypeptide is V-set and transmembrane domain-containing protein 4 (Vstm4) (Mus musculus (Mouse)).